A 509-amino-acid polypeptide reads, in one-letter code: ATP synthase subunit alpha (509 aa).

169 to 176 (GDRQTGKT) contacts ATP.

It belongs to the ATPase alpha/beta chains family. As to quaternary structure, F-type ATPases have 2 components, CF(1) - the catalytic core - and CF(0) - the membrane proton channel. CF(1) has five subunits: alpha(3), beta(3), gamma(1), delta(1), epsilon(1). CF(0) has three main subunits: a(1), b(2) and c(9-12). The alpha and beta chains form an alternating ring which encloses part of the gamma chain. CF(1) is attached to CF(0) by a central stalk formed by the gamma and epsilon chains, while a peripheral stalk is formed by the delta and b chains.

Its subcellular location is the cell inner membrane. It carries out the reaction ATP + H2O + 4 H(+)(in) = ADP + phosphate + 5 H(+)(out). In terms of biological role, produces ATP from ADP in the presence of a proton gradient across the membrane. The alpha chain is a regulatory subunit. In Sinorhizobium fredii (strain NBRC 101917 / NGR234), this protein is ATP synthase subunit alpha.